Consider the following 428-residue polypeptide: Type II methyltransferase M.TthHB8I (428 aa).

The interval 407-428 is disordered; sequence RKGNTERRKHGPYTSPESAGSF.

This sequence belongs to the N(4)/N(6)-methyltransferase family.

The catalysed reaction is a 2'-deoxyadenosine in DNA + S-adenosyl-L-methionine = an N(6)-methyl-2'-deoxyadenosine in DNA + S-adenosyl-L-homocysteine + H(+). A gamma subtype methylase, recognizes the double-stranded sequence 5'-TCGA-3', methylates A-4 on both strands and protects the DNA from cleavage by the TthHB8I endonuclease. This Thermus thermophilus (strain ATCC 27634 / DSM 579 / HB8) protein is Type II methyltransferase M.TthHB8I.